We begin with the raw amino-acid sequence, 550 residues long: CCR4-NOT transcription complex subunit 6-like-B (550 aa).

The interval 1 to 148 (MPKEKYDPPD…LYQEPDGMRK (148 aa)) is required for interaction with cnot1, cnot3 and cnot7. LRR repeat units lie at residues 52 to 73 (HLTVLHLSDNNLSRIPPDIAKL), 75 to 96 (NLVYLDLSSNKLRSLPAELGNV), 98 to 120 (SLRELLLNNNLLRVLPFELGRLF), and 121 to 143 (RLQTLGLKGNPLSQDILGLYQEP). A nuclease domain region spans residues 153-550 (MLDNLSVHPE…INGVHLPSRR (398 aa)). Residue Glu-235 coordinates Mg(2+). Substrate contacts are provided by Glu-235, Glu-271, His-355, and Pro-360. Asp-405 is a binding site for Mg(2+). Asp-405 (proton donor/acceptor) is an active-site residue. Residues Asn-407, Asn-474, and Phe-479 each coordinate substrate.

Belongs to the CCR4/nocturin family. As to quaternary structure, component of the CCR4-NOT complex. The cofactor is Mg(2+).

It localises to the cytoplasm. The protein localises to the nucleus. The enzyme catalyses Exonucleolytic cleavage of poly(A) to 5'-AMP.. Its function is as follows. Poly(A) nuclease with 3'-5' RNase activity. Catalytic component of the CCR4-NOT complex which is one of the major cellular mRNA deadenylases and is linked to various cellular processes including bulk mRNA degradation, miRNA-mediated repression, translational repression during translational initiation and general transcription regulation. Additional complex functions may be a consequence of its influence on mRNA expression. In Xenopus laevis (African clawed frog), this protein is CCR4-NOT transcription complex subunit 6-like-B (cnot6l-b).